A 261-amino-acid chain; its full sequence is Adenosylcobinamide-GDP ribazoletransferase (261 aa).

5 consecutive transmembrane segments (helical) span residues 12-32 (NLFFVAMSFFTRIPVPSWVVI), 46-66 (LVGLLIGLICALVFWLAQLIL), 67-87 (PASIAILLAMVAGVLVTGAFH), 120-140 (GALSLGLVLLLKWQLLVELAL), and 199-219 (IFVLLWLNGVAAFVLFITLWL).

This sequence belongs to the CobS family. Mg(2+) serves as cofactor.

The protein localises to the cell inner membrane. The catalysed reaction is alpha-ribazole + adenosylcob(III)inamide-GDP = adenosylcob(III)alamin + GMP + H(+). The enzyme catalyses alpha-ribazole 5'-phosphate + adenosylcob(III)inamide-GDP = adenosylcob(III)alamin 5'-phosphate + GMP + H(+). The protein operates within cofactor biosynthesis; adenosylcobalamin biosynthesis; adenosylcobalamin from cob(II)yrinate a,c-diamide: step 7/7. Functionally, joins adenosylcobinamide-GDP and alpha-ribazole to generate adenosylcobalamin (Ado-cobalamin). Also synthesizes adenosylcobalamin 5'-phosphate from adenosylcobinamide-GDP and alpha-ribazole 5'-phosphate. The sequence is that of Adenosylcobinamide-GDP ribazoletransferase from Shewanella frigidimarina (strain NCIMB 400).